The primary structure comprises 305 residues: Ribonuclease BN (305 aa).

Residues H64, H66, D68, H69, H141, D212, and H270 each coordinate Zn(2+). Catalysis depends on D68, which acts as the Proton acceptor.

Belongs to the RNase Z family. RNase BN subfamily. In terms of assembly, homodimer. Zn(2+) is required as a cofactor.

Zinc phosphodiesterase, which has both exoribonuclease and endoribonuclease activities. In Escherichia coli O139:H28 (strain E24377A / ETEC), this protein is Ribonuclease BN.